Here is a 253-residue protein sequence, read N- to C-terminus: Triosephosphate isomerase, cytosolic (253 aa).

The substrate site is built by asparagine 10 and lysine 12. Histidine 96 serves as the catalytic Electrophile. Catalysis depends on glutamate 166, which acts as the Proton acceptor.

Belongs to the triosephosphate isomerase family. Homodimer. In terms of tissue distribution, starchy endosperm.

Its subcellular location is the cytoplasm. The enzyme catalyses D-glyceraldehyde 3-phosphate = dihydroxyacetone phosphate. Its pathway is carbohydrate biosynthesis; gluconeogenesis. The protein operates within carbohydrate degradation; glycolysis; D-glyceraldehyde 3-phosphate from glycerone phosphate: step 1/1. The chain is Triosephosphate isomerase, cytosolic from Hordeum vulgare (Barley).